The sequence spans 330 residues: Methionyl-tRNA formyltransferase (330 aa).

117–120 (SLLP) contributes to the (6S)-5,6,7,8-tetrahydrofolate binding site.

It belongs to the Fmt family.

It carries out the reaction L-methionyl-tRNA(fMet) + (6R)-10-formyltetrahydrofolate = N-formyl-L-methionyl-tRNA(fMet) + (6S)-5,6,7,8-tetrahydrofolate + H(+). Functionally, attaches a formyl group to the free amino group of methionyl-tRNA(fMet). The formyl group appears to play a dual role in the initiator identity of N-formylmethionyl-tRNA by promoting its recognition by IF2 and preventing the misappropriation of this tRNA by the elongation apparatus. This chain is Methionyl-tRNA formyltransferase, found in Verminephrobacter eiseniae (strain EF01-2).